Consider the following 170-residue polypeptide: Protein-lysine myristoyltransferase HlyC (170 aa).

Active-site residues include H23 and D92. H151 contributes to the heme binding site.

It belongs to the RTX toxin acyltransferase family. As to quaternary structure, monomer. Proteolytically cleaved by the protease systems ClpAP, ClpXP and FtsH, leading to its degradation.

The protein resides in the cytoplasm. It catalyses the reaction tetradecanoyl-[ACP] + L-lysyl-[protein] = N(6)-tetradecanoyl-L-lysyl-[protein] + holo-[ACP] + H(+). With respect to regulation, the acyltransferase activity is inhibited by heme. In terms of biological role, protein-lysine myristoyltransferase that catalyzes myristoylation of the protoxin (HlyA) at two internal lysine residues, thereby converting it to the active toxin. In Escherichia coli, this protein is Protein-lysine myristoyltransferase HlyC.